The sequence spans 410 residues: Dephospho-CoA kinase (410 aa).

One can recognise a DPCK domain in the interval 3-201; it reads CIGITGGIGA…HRILPFAYNL (199 aa). 11-16 contacts ATP; sequence GAGKSL. A UPF0157 region spans residues 196 to 410; the sequence is PFAYNLSQRQ…EWADSTGWRL (215 aa).

In the N-terminal section; belongs to the CoaE family. The protein in the C-terminal section; belongs to the UPF0157 (GrpB) family.

The protein localises to the cytoplasm. The enzyme catalyses 3'-dephospho-CoA + ATP = ADP + CoA + H(+). It participates in cofactor biosynthesis; coenzyme A biosynthesis; CoA from (R)-pantothenate: step 5/5. Catalyzes the phosphorylation of the 3'-hydroxyl group of dephosphocoenzyme A to form coenzyme A. The protein is Dephospho-CoA kinase of Mycobacterium leprae (strain TN).